The sequence spans 505 residues: UDP-N-acetylmuramyl-tripeptide synthetase (505 aa).

A UDP-N-acetyl-alpha-D-muramoyl-L-alanyl-D-glutamate-binding site is contributed by Ser-35. 118-124 is a binding site for ATP; sequence GTDGKSS. Residues 163-164, Thr-190, and Arg-200 contribute to the UDP-N-acetyl-alpha-D-muramoyl-L-alanyl-D-glutamate site; that span reads ST. The residue at position 232 (Lys-232) is an N6-carboxylysine.

Belongs to the MurCDEF family. MurE subfamily. Carboxylation is probably crucial for Mg(2+) binding and, consequently, for the gamma-phosphate positioning of ATP.

Its subcellular location is the cytoplasm. It participates in cell wall biogenesis; peptidoglycan biosynthesis. Functionally, catalyzes the addition of an amino acid to the nucleotide precursor UDP-N-acetylmuramoyl-L-alanyl-D-glutamate (UMAG) in the biosynthesis of bacterial cell-wall peptidoglycan. In Borreliella afzelii (strain PKo) (Borrelia afzelii), this protein is UDP-N-acetylmuramyl-tripeptide synthetase.